A 234-amino-acid chain; its full sequence is Opacity protein opA56 (234 aa).

Residue A1 is a signal peptide.

This sequence belongs to the opacity porin family.

The protein resides in the cell outer membrane. Functionally, implicated in a number of adherence functions. OPA proteins are implicated in pathogenesis and are subject to phase variation. This chain is Opacity protein opA56 (opaF), found in Neisseria gonorrhoeae.